A 407-amino-acid chain; its full sequence is MTETTPKTAPWTVQKRTAVLVLADGTVIEGKGLGATGAVEAEVVFNTALTGYEEILTDPSYAGQIVTFTFPHIGNVGANAEDIEDLTPANRHGAVGAIFKADITAPSNFRAAEDLDSWLKHRGIIALAGIDTRALTALIRERGAQNAVIAHDPNGNFDLDALKARAANWCGLENLDLAKDVTIGQSLVWKELPWTLQDGYGEQDAPQYHVVALDFGVKRNILRLLTGLGAKVTVLPATATAEDVLAHNPDGVFLSNGPGDPAATGEYAVPTIGKLVETGIPLFGICLGHQMLALALGGRTEKMHQGHHGANHPVKDYTTGKVEIVSMNHGFAVDSDSLPENVEETHVSLFDGTNCGLRVVGKPVFSVQHHPEASPGPQDSHYLFRRFINLIRERKGQAPLPEREQAA.

The CPSase stretch occupies residues 1–205; the sequence is MTETTPKTAP…LQDGYGEQDA (205 aa). L-glutamine is bound by residues S60, G257, and G259. The Glutamine amidotransferase type-1 domain occupies 209–397; that stretch reads HVVALDFGVK…INLIRERKGQ (189 aa). C286 acts as the Nucleophile in catalysis. L-glutamine-binding residues include L287, Q290, N328, G330, and F331. Residues H370 and E372 contribute to the active site.

This sequence belongs to the CarA family. Composed of two chains; the small (or glutamine) chain promotes the hydrolysis of glutamine to ammonia, which is used by the large (or ammonia) chain to synthesize carbamoyl phosphate. Tetramer of heterodimers (alpha,beta)4.

It catalyses the reaction hydrogencarbonate + L-glutamine + 2 ATP + H2O = carbamoyl phosphate + L-glutamate + 2 ADP + phosphate + 2 H(+). The enzyme catalyses L-glutamine + H2O = L-glutamate + NH4(+). It participates in amino-acid biosynthesis; L-arginine biosynthesis; carbamoyl phosphate from bicarbonate: step 1/1. The protein operates within pyrimidine metabolism; UMP biosynthesis via de novo pathway; (S)-dihydroorotate from bicarbonate: step 1/3. Functionally, small subunit of the glutamine-dependent carbamoyl phosphate synthetase (CPSase). CPSase catalyzes the formation of carbamoyl phosphate from the ammonia moiety of glutamine, carbonate, and phosphate donated by ATP, constituting the first step of 2 biosynthetic pathways, one leading to arginine and/or urea and the other to pyrimidine nucleotides. The small subunit (glutamine amidotransferase) binds and cleaves glutamine to supply the large subunit with the substrate ammonia. The chain is Carbamoyl phosphate synthase small chain from Brucella canis (strain ATCC 23365 / NCTC 10854 / RM-666).